The following is a 221-amino-acid chain: 6-phosphogluconate phosphatase (221 aa).

The active-site Nucleophile is Asp10. The Mg(2+) site is built by Asp10, Asp12, and Asp167. 10 to 12 (DCD) is a substrate binding site.

The protein belongs to the HAD-like hydrolase superfamily. CbbY/CbbZ/Gph/YieH family. Mg(2+) serves as cofactor. Requires Mn(2+) as cofactor. Co(2+) is required as a cofactor. It depends on Zn(2+) as a cofactor.

Functionally, catalyzes strongly the dephosphorylation of 6-phosphogluconate (6P-Glu) and slightly the dephosphorylation of dihydroxyacetone phosphate (DHAP) and phosphoenolpyruvate (PEP). Also hydrolyzes both purines (GMP and IMP) and pyrimidines as secondary substrates. The polypeptide is 6-phosphogluconate phosphatase (yieH) (Escherichia coli (strain K12)).